The primary structure comprises 203 residues: MLKIIDLGKTEYQEALEIQNRIFERKLTGEDQDNYFFITEHHPVYTAGKTTKPEHILNTEDIPVYYIDRGGSVTFHGEGQIVVYPVLSLKNRISVKRYVFTLEEIVIKTVKEIGINAYRKDRLRGVFTDKGKIASVGVKVSKGVTKHGISLNVNIEKRYFRRIIPCGIWDIPVCNITDFVEADIDKIKLKLIKHIIKEGRKLV.

Positions 30–203 constitute a BPL/LPL catalytic domain; that stretch reads EDQDNYFFIT…HIIKEGRKLV (174 aa). Substrate is bound by residues 69–76, 135–137, and 148–150; these read RGGSVTFH, SVG, and GIS. Residue C166 is the Acyl-thioester intermediate of the active site.

Belongs to the LipB family.

It is found in the cytoplasm. It catalyses the reaction octanoyl-[ACP] + L-lysyl-[protein] = N(6)-octanoyl-L-lysyl-[protein] + holo-[ACP] + H(+). It participates in protein modification; protein lipoylation via endogenous pathway; protein N(6)-(lipoyl)lysine from octanoyl-[acyl-carrier-protein]: step 1/2. In terms of biological role, catalyzes the transfer of endogenously produced octanoic acid from octanoyl-acyl-carrier-protein onto the lipoyl domains of lipoate-dependent enzymes. Lipoyl-ACP can also act as a substrate although octanoyl-ACP is likely to be the physiological substrate. In Persephonella marina (strain DSM 14350 / EX-H1), this protein is Octanoyltransferase.